An 87-amino-acid chain; its full sequence is uncharacterized protein (87 aa).

It to A.fulgidus AF_1348 and AF_1363.

This is an uncharacterized protein from Archaeoglobus fulgidus (strain ATCC 49558 / DSM 4304 / JCM 9628 / NBRC 100126 / VC-16).